The primary structure comprises 172 residues: 3-hydroxydecanoyl-[acyl-carrier-protein] dehydratase (172 aa).

Histidine 71 is an active-site residue.

Belongs to the thioester dehydratase family. FabA subfamily. Homodimer.

The protein localises to the cytoplasm. The enzyme catalyses a (3R)-hydroxyacyl-[ACP] = a (2E)-enoyl-[ACP] + H2O. It catalyses the reaction (3R)-hydroxydecanoyl-[ACP] = (2E)-decenoyl-[ACP] + H2O. The catalysed reaction is (2E)-decenoyl-[ACP] = (3Z)-decenoyl-[ACP]. It participates in lipid metabolism; fatty acid biosynthesis. Necessary for the introduction of cis unsaturation into fatty acids. Catalyzes the dehydration of (3R)-3-hydroxydecanoyl-ACP to E-(2)-decenoyl-ACP and then its isomerization to Z-(3)-decenoyl-ACP. Can catalyze the dehydratase reaction for beta-hydroxyacyl-ACPs with saturated chain lengths up to 16:0, being most active on intermediate chain length. The sequence is that of 3-hydroxydecanoyl-[acyl-carrier-protein] dehydratase from Proteus mirabilis (strain HI4320).